Here is a 651-residue protein sequence, read N- to C-terminus: tRNA uridine 5-carboxymethylaminomethyl modification enzyme MnmG (651 aa).

11–16 (GAGHAG) serves as a coordination point for FAD. Position 296–310 (296–310 (GPRYCPSIEDKIVRF)) interacts with NAD(+).

It belongs to the MnmG family. In terms of assembly, homodimer. Heterotetramer of two MnmE and two MnmG subunits. Requires FAD as cofactor.

Its subcellular location is the cytoplasm. In terms of biological role, NAD-binding protein involved in the addition of a carboxymethylaminomethyl (cmnm) group at the wobble position (U34) of certain tRNAs, forming tRNA-cmnm(5)s(2)U34. This is tRNA uridine 5-carboxymethylaminomethyl modification enzyme MnmG from Chloroflexus aurantiacus (strain ATCC 29366 / DSM 635 / J-10-fl).